The sequence spans 216 residues: Uracil-DNA glycosylase (216 aa).

The active-site Proton acceptor is Asp59.

This sequence belongs to the uracil-DNA glycosylase (UDG) superfamily. UNG family.

The protein localises to the cytoplasm. It catalyses the reaction Hydrolyzes single-stranded DNA or mismatched double-stranded DNA and polynucleotides, releasing free uracil.. Functionally, excises uracil residues from the DNA which can arise as a result of misincorporation of dUMP residues by DNA polymerase or due to deamination of cytosine. The chain is Uracil-DNA glycosylase from Staphylococcus epidermidis (strain ATCC 35984 / DSM 28319 / BCRC 17069 / CCUG 31568 / BM 3577 / RP62A).